The primary structure comprises 599 residues: DNA primase (599 aa).

The CHC2-type zinc-finger motif lies at 38 to 62 (CPFHDEKTPSFTVSEDKQICHCFGC). The 82-residue stretch at 260–341 (DEIVLLEGFM…NVFVIQLPSG (82 aa)) folds into the Toprim domain. Residues glutamate 266, aspartate 310, and aspartate 312 each contribute to the Mg(2+) site.

The protein belongs to the DnaG primase family. Monomer. Interacts with DnaB. It depends on Zn(2+) as a cofactor. The cofactor is Mg(2+).

It carries out the reaction ssDNA + n NTP = ssDNA/pppN(pN)n-1 hybrid + (n-1) diphosphate.. Functionally, RNA polymerase that catalyzes the synthesis of short RNA molecules used as primers for DNA polymerase during DNA replication. The protein is DNA primase of Staphylococcus aureus (strain COL).